We begin with the raw amino-acid sequence, 433 residues long: 23S rRNA (uracil(1939)-C(5))-methyltransferase RlmD (433 aa).

The region spanning 10–68 (RTTTRQIITVSVNDLDSFGQGVARHNGKTLFIPGLLPQENAEVAVTEDKKQYARAKVVR) is the TRAM domain. The [4Fe-4S] cluster site is built by Cys-81, Cys-87, Cys-90, and Cys-162. Residues Gln-265, Phe-294, Asn-299, Glu-315, Asn-342, and Asp-363 each coordinate S-adenosyl-L-methionine. The Nucleophile role is filled by Cys-389.

Belongs to the class I-like SAM-binding methyltransferase superfamily. RNA M5U methyltransferase family. RlmD subfamily.

The enzyme catalyses uridine(1939) in 23S rRNA + S-adenosyl-L-methionine = 5-methyluridine(1939) in 23S rRNA + S-adenosyl-L-homocysteine + H(+). Functionally, catalyzes the formation of 5-methyl-uridine at position 1939 (m5U1939) in 23S rRNA. The polypeptide is 23S rRNA (uracil(1939)-C(5))-methyltransferase RlmD (Shigella flexneri serotype 5b (strain 8401)).